Here is a 100-residue protein sequence, read N- to C-terminus: Urease subunit gamma (100 aa).

It belongs to the urease gamma subunit family. Heterotrimer of UreA (gamma), UreB (beta) and UreC (alpha) subunits. Three heterotrimers associate to form the active enzyme.

It is found in the cytoplasm. It carries out the reaction urea + 2 H2O + H(+) = hydrogencarbonate + 2 NH4(+). Its pathway is nitrogen metabolism; urea degradation; CO(2) and NH(3) from urea (urease route): step 1/1. In Ruegeria pomeroyi (strain ATCC 700808 / DSM 15171 / DSS-3) (Silicibacter pomeroyi), this protein is Urease subunit gamma.